The sequence spans 264 residues: Tryptophan synthase alpha chain (264 aa).

Residues glutamate 49 and aspartate 60 each act as proton acceptor in the active site.

Belongs to the TrpA family. In terms of assembly, tetramer of two alpha and two beta chains.

It catalyses the reaction (1S,2R)-1-C-(indol-3-yl)glycerol 3-phosphate + L-serine = D-glyceraldehyde 3-phosphate + L-tryptophan + H2O. It functions in the pathway amino-acid biosynthesis; L-tryptophan biosynthesis; L-tryptophan from chorismate: step 5/5. The alpha subunit is responsible for the aldol cleavage of indoleglycerol phosphate to indole and glyceraldehyde 3-phosphate. The polypeptide is Tryptophan synthase alpha chain (Microcystis aeruginosa (strain NIES-843 / IAM M-2473)).